Reading from the N-terminus, the 298-residue chain is ATP synthase gamma chain (298 aa).

It belongs to the ATPase gamma chain family. As to quaternary structure, F-type ATPases have 2 components, CF(1) - the catalytic core - and CF(0) - the membrane proton channel. CF(1) has five subunits: alpha(3), beta(3), gamma(1), delta(1), epsilon(1). CF(0) has three main subunits: a, b and c.

It is found in the cell inner membrane. Its function is as follows. Produces ATP from ADP in the presence of a proton gradient across the membrane. The gamma chain is believed to be important in regulating ATPase activity and the flow of protons through the CF(0) complex. This Francisella tularensis subsp. mediasiatica (strain FSC147) protein is ATP synthase gamma chain.